We begin with the raw amino-acid sequence, 290 residues long: Acetyl-coenzyme A carboxylase carboxyl transferase subunit beta (290 aa).

The 263-residue stretch at 28–290 (VMTKCPQCKK…KGGEEGWWRN (263 aa)) folds into the CoA carboxyltransferase N-terminal domain. Zn(2+) is bound by residues cysteine 32, cysteine 35, cysteine 51, and cysteine 54. The C4-type zinc finger occupies 32-54 (CPQCKKIMYTKELIKNLRVCLSC).

Belongs to the AccD/PCCB family. As to quaternary structure, acetyl-CoA carboxylase is a heterohexamer composed of biotin carboxyl carrier protein (AccB), biotin carboxylase (AccC) and two subunits each of ACCase subunit alpha (AccA) and ACCase subunit beta (AccD). It depends on Zn(2+) as a cofactor.

Its subcellular location is the cytoplasm. It carries out the reaction N(6)-carboxybiotinyl-L-lysyl-[protein] + acetyl-CoA = N(6)-biotinyl-L-lysyl-[protein] + malonyl-CoA. It functions in the pathway lipid metabolism; malonyl-CoA biosynthesis; malonyl-CoA from acetyl-CoA: step 1/1. Component of the acetyl coenzyme A carboxylase (ACC) complex. Biotin carboxylase (BC) catalyzes the carboxylation of biotin on its carrier protein (BCCP) and then the CO(2) group is transferred by the transcarboxylase to acetyl-CoA to form malonyl-CoA. This is Acetyl-coenzyme A carboxylase carboxyl transferase subunit beta from Geobacillus kaustophilus (strain HTA426).